The chain runs to 565 residues: Protein nucleotidyltransferase YdiU (565 aa).

Residues glycine 118, glycine 120, arginine 121, lysine 141, aspartate 153, glycine 154, arginine 211, and arginine 218 each coordinate ATP. The active-site Proton acceptor is aspartate 290. Residues asparagine 291 and aspartate 300 each contribute to the Mg(2+) site. Aspartate 300 is an ATP binding site.

Belongs to the SELO family. The cofactor is Mg(2+). Mn(2+) is required as a cofactor.

It catalyses the reaction L-seryl-[protein] + ATP = 3-O-(5'-adenylyl)-L-seryl-[protein] + diphosphate. The enzyme catalyses L-threonyl-[protein] + ATP = 3-O-(5'-adenylyl)-L-threonyl-[protein] + diphosphate. The catalysed reaction is L-tyrosyl-[protein] + ATP = O-(5'-adenylyl)-L-tyrosyl-[protein] + diphosphate. It carries out the reaction L-histidyl-[protein] + UTP = N(tele)-(5'-uridylyl)-L-histidyl-[protein] + diphosphate. It catalyses the reaction L-seryl-[protein] + UTP = O-(5'-uridylyl)-L-seryl-[protein] + diphosphate. The enzyme catalyses L-tyrosyl-[protein] + UTP = O-(5'-uridylyl)-L-tyrosyl-[protein] + diphosphate. Its function is as follows. Nucleotidyltransferase involved in the post-translational modification of proteins. It can catalyze the addition of adenosine monophosphate (AMP) or uridine monophosphate (UMP) to a protein, resulting in modifications known as AMPylation and UMPylation. In Nitrosospira multiformis (strain ATCC 25196 / NCIMB 11849 / C 71), this protein is Protein nucleotidyltransferase YdiU.